Reading from the N-terminus, the 367-residue chain is Leucine dehydrogenase (367 aa).

The active site involves lysine 80. Residue 180–186 (GVGNVAY) coordinates NAD(+).

It belongs to the Glu/Leu/Phe/Val dehydrogenases family. As to quaternary structure, homohexamer.

The catalysed reaction is L-leucine + NAD(+) + H2O = 4-methyl-2-oxopentanoate + NH4(+) + NADH + H(+). It participates in amino-acid degradation; L-leucine degradation; 4-methyl-2-oxopentanoate from L-leucine (dehydrogenase route): step 1/1. Functionally, catalyzes the reversible deamination of L-leucine to 4-methyl-2-oxopentanoate. The protein is Leucine dehydrogenase (ldh) of Geobacillus stearothermophilus (Bacillus stearothermophilus).